We begin with the raw amino-acid sequence, 75 residues long: uncharacterized protein (75 aa).

Residues 49 to 69 (VDIVAVATTLPFIVAVICIVF) traverse the membrane as a helical segment.

Its subcellular location is the host membrane. This is an uncharacterized protein from Saccharolobus islandicus (Sulfolobus islandicus).